The sequence spans 376 residues: Glucose-1-phosphate adenylyltransferase (376 aa).

Residues Y101, G166, 181-182 (EK), and S192 each bind alpha-D-glucose 1-phosphate.

This sequence belongs to the bacterial/plant glucose-1-phosphate adenylyltransferase family. Homotetramer.

The catalysed reaction is alpha-D-glucose 1-phosphate + ATP + H(+) = ADP-alpha-D-glucose + diphosphate. The protein operates within glycan biosynthesis; glycogen biosynthesis. In terms of biological role, involved in the biosynthesis of ADP-glucose, a building block required for the elongation reactions to produce glycogen. Catalyzes the reaction between ATP and alpha-D-glucose 1-phosphate (G1P) to produce pyrophosphate and ADP-Glc. The chain is Glucose-1-phosphate adenylyltransferase from Bacillus cereus (strain ZK / E33L).